The sequence spans 351 residues: Phosphoribosylformylglycinamidine cyclo-ligase (351 aa).

This sequence belongs to the AIR synthase family.

Its subcellular location is the cytoplasm. It carries out the reaction 2-formamido-N(1)-(5-O-phospho-beta-D-ribosyl)acetamidine + ATP = 5-amino-1-(5-phospho-beta-D-ribosyl)imidazole + ADP + phosphate + H(+). The protein operates within purine metabolism; IMP biosynthesis via de novo pathway; 5-amino-1-(5-phospho-D-ribosyl)imidazole from N(2)-formyl-N(1)-(5-phospho-D-ribosyl)glycinamide: step 2/2. The chain is Phosphoribosylformylglycinamidine cyclo-ligase from Burkholderia pseudomallei (strain 668).